Reading from the N-terminus, the 631-residue chain is ESX-3 secretion system protein EccA3 (631 aa).

385 to 392 is a binding site for ATP; it reads GPPGTGKT.

It belongs to the CbxX/CfxQ family. In terms of assembly, part of the ESX-3 / type VII secretion system (T7SS), which is composed of cytosolic and membrane components.

The protein localises to the cytoplasm. Part of the ESX-3 specialized secretion system, which is important for iron and zinc uptake or homeostasis. EccA3 exhibits ATPase activity and may provide energy for the export of ESX-3 substrates. The polypeptide is ESX-3 secretion system protein EccA3 (Mycobacterium tuberculosis (strain CDC 1551 / Oshkosh)).